The primary structure comprises 138 residues: uncharacterized protein (138 aa).

The next 3 membrane-spanning stretches (helical) occupy residues Leu12 to Ile32, Leu62 to Leu82, and Phe111 to Ser131.

It localises to the cell membrane. This is an uncharacterized protein from Haemophilus influenzae (strain ATCC 51907 / DSM 11121 / KW20 / Rd).